The chain runs to 418 residues: Mitochondrial outer membrane protein SLC25A46 (418 aa).

The segment at 1-30 is disordered; that stretch reads MHPRRPDGFDGLGYRGGARDEQGFGGAFPA. At S32 the chain carries Phosphoserine. The interval 44-93 is disordered; it reads TTPPDIPGSRNLHWGEKSPPYGVPTTSTPYEGPTEEPFSSGGGGSVQGQS. The residue at position 45 (T45) is a Phosphothreonine. One copy of the Solcar 1 repeat lies at 96-187; that stretch reads QLNRFAGFGI…GIISEFTPLP (92 aa). 6 helical membrane passes run 103–123, 167–187, 202–222, 258–278, 314–334, and 382–402; these read FGIG…CIVL, FIVQ…TPLP, HLLL…ASLI, LLPL…HYII, FPEL…LYPL, and VFGF…HAAV. A Solcar 2 repeat occupies 311-413; sequence DAYFPELIAN…QITKIIYSTL (103 aa).

This sequence belongs to the mitochondrial carrier (TC 2.A.29) family. As to quaternary structure, associates with the mitochondrial contact site and cristae organizing system (MICOS) complex. May associate with the endoplasmic reticulum membrane protein complex (EMC).

The protein resides in the mitochondrion outer membrane. Functionally, transmembrane protein of the mitochondrial outer membrane that controls mitochondrial organization. May regulate the assembly of the MICOS (mitochondrial contact site and cristae organizing system) complex which is essential to the biogenesis and dynamics of mitochondrial cristae, the inwards folds of the inner mitochondrial membrane. Through its interaction with the EMC (endoplasmic reticulum membrane protein complex), could regulate mitochondrial lipid homeostasis and thereby mitochondrial fission. This chain is Mitochondrial outer membrane protein SLC25A46, found in Homo sapiens (Human).